The sequence spans 440 residues: Xylose isomerase (440 aa).

Residues histidine 100 and aspartate 103 contribute to the active site. Residues glutamate 231, glutamate 267, histidine 270, aspartate 295, aspartate 306, aspartate 308, and aspartate 338 each contribute to the Mg(2+) site.

The protein belongs to the xylose isomerase family. Homotetramer. The cofactor is Mg(2+).

Its subcellular location is the cytoplasm. The enzyme catalyses alpha-D-xylose = alpha-D-xylulofuranose. The protein is Xylose isomerase of Burkholderia vietnamiensis (strain G4 / LMG 22486) (Burkholderia cepacia (strain R1808)).